Consider the following 286-residue polypeptide: Protease HtpX homolog (286 aa).

2 consecutive transmembrane segments (helical) span residues Thr7 to Gly27 and Ser29 to Ser49. Zn(2+) is bound at residue His131. Residue Glu132 is part of the active site. A Zn(2+)-binding site is contributed by His135. Transmembrane regions (helical) follow at residues Leu146 to Gly166 and Ile177 to Ile197. Glu202 lines the Zn(2+) pocket.

It belongs to the peptidase M48B family. It depends on Zn(2+) as a cofactor.

It localises to the cell inner membrane. This chain is Protease HtpX homolog, found in Ralstonia nicotianae (strain ATCC BAA-1114 / GMI1000) (Ralstonia solanacearum).